The primary structure comprises 1013 residues: A-type ATP synthase subunit A (1013 aa).

Residues 392-525 (FLGYVIGDGT…LTYLLAKLGI (134 aa)) form the DOD-type homing endonuclease domain.

Belongs to the ATPase alpha/beta chains family. As to quaternary structure, has multiple subunits with at least A(3), B(3), C, D, E, F, H, I and proteolipid K(x). Post-translationally, this protein undergoes a protein self splicing that involves a post-translational excision of the VDE intervening region (intein) followed by peptide ligation.

The protein resides in the cell membrane. The catalysed reaction is ATP + H2O + 4 H(+)(in) = ADP + phosphate + 5 H(+)(out). Its function is as follows. Component of the A-type ATP synthase that produces ATP from ADP in the presence of a proton gradient across the membrane. The A chain is the catalytic subunit. The sequence is that of A-type ATP synthase subunit A from Pyrococcus furiosus (strain ATCC 43587 / DSM 3638 / JCM 8422 / Vc1).